The following is a 309-amino-acid chain: Taste receptor type 2 member 31 (309 aa).

Over 1–2 the chain is Extracellular; that stretch reads MT. A helical transmembrane segment spans residues 3-23; it reads TFIPIIFSSLVVVIFVIGNFA. The Cytoplasmic portion of the chain corresponds to 24 to 55; that stretch reads NGFIALVNSIEWFKRQKISFADQILTALAVSR. Residues 56 to 76 traverse the membrane as a helical segment; that stretch reads VGLLWVLLLNWYSTVLNPAFY. Residues 77 to 100 are Extracellular-facing; sequence SVEVRTTAYNVWAVTGHFSNWLAT. The helical transmembrane segment at 101–121 threads the bilayer; the sequence is SLSIFYLLKIANFSNLIFLHL. The Cytoplasmic portion of the chain corresponds to 122 to 126; the sequence is KRRVK. A helical transmembrane segment spans residues 127 to 147; the sequence is SVILVMLLGPLLFLACQLFMI. The Extracellular portion of the chain corresponds to 148 to 181; it reads NMKEIVRTKEYEGNMTWKIKLRSAVYLSDATVTT. Asn161 carries N-linked (GlcNAc...) asparagine glycosylation. Residues 182–202 form a helical membrane-spanning segment; that stretch reads LGNLVPFTLTLLCFLLLICSL. Residues 203-229 are Cytoplasmic-facing; that stretch reads CKHLKKMQLHGKGSQDPSTKVHIKVLQ. The helical transmembrane segment at 230–250 threads the bilayer; sequence TVISFLLLCAIYFLSIMISVW. At 251-259 the chain is on the extracellular side; that stretch reads SFGSLKNKP. Residues 260-280 form a helical membrane-spanning segment; sequence VFMFCKAMRFSYPSIHPFILI. The Cytoplasmic segment spans residues 281-309; sequence WGNKKLKQTFLSVLRQVRYWVKGEKPSSP.

It belongs to the G-protein coupled receptor T2R family.

Its subcellular location is the membrane. In terms of biological role, receptor that may play a role in the perception of bitterness and is gustducin-linked. May play a role in sensing the chemical composition of the gastrointestinal content. The activity of this receptor may stimulate alpha gustducin, mediate PLC-beta-2 activation and lead to the gating of TRPM5. This is Taste receptor type 2 member 31 (TAS2R31) from Pan troglodytes (Chimpanzee).